Here is a 293-residue protein sequence, read N- to C-terminus: Autophagy-related protein 36 (293 aa).

Polar residues-rich tracts occupy residues 98 to 108 (ISSDSNKNSPP) and 260 to 273 (GETL…ASSS). 2 disordered regions span residues 98–121 (ISSD…NIRS) and 250–273 (SRSR…ASSS).

As to quaternary structure, interacts with PEX3, ATG8 and ATG11.

It localises to the peroxisome. Its function is as follows. Required for autophagic breakdown of peroxisomes, called pexophagy, through linking peroxisomes to the autophagy apparatus. Involved in regulation of the glyoxylate cycle. In Saccharomyces cerevisiae (strain ATCC 204508 / S288c) (Baker's yeast), this protein is Autophagy-related protein 36 (ATG36).